A 144-amino-acid chain; its full sequence is Large ribosomal subunit protein uL11 (144 aa).

The protein belongs to the universal ribosomal protein uL11 family. Part of the ribosomal stalk of the 50S ribosomal subunit. Interacts with L10 and the large rRNA to form the base of the stalk. L10 forms an elongated spine to which L12 dimers bind in a sequential fashion forming a multimeric L10(L12)X complex. In terms of processing, one or more lysine residues are methylated.

Its function is as follows. Forms part of the ribosomal stalk which helps the ribosome interact with GTP-bound translation factors. The chain is Large ribosomal subunit protein uL11 from Streptomyces avermitilis (strain ATCC 31267 / DSM 46492 / JCM 5070 / NBRC 14893 / NCIMB 12804 / NRRL 8165 / MA-4680).